Reading from the N-terminus, the 489-residue chain is Sphingolipid C9-methyltransferase (489 aa).

The next 2 helical transmembrane spans lie at 29–49 and 59–79; these read GAKNFSNWLLLGLLTGVPLFV and TFIFFFILFAIPILMAYWTVL. Residues 202–203, 239–247, 265–270, and 295–296 each bind S-adenosyl-L-methionine; these read YT, LLDLGCGWG, TLGKNQ, and YR.

The protein belongs to the CFA/CMAS family.

The protein localises to the membrane. The enzyme catalyses a (4E,8E)-4-sphinga-4,8-dienine ceramide + S-adenosyl-L-methionine = a 9-methyl-(4E,8E)-sphinga-4,8-dienine ceramide + S-adenosyl-L-homocysteine + H(+). It participates in lipid metabolism; sphingolipid metabolism. Catalyzes methylation of the sphingoid base component of glucosylceramides (GluCers) at the C9-position. Sphingolipid C9-methylation requires 4,8-desaturated ceramides as substrates. Glucosylceramides play important roles in growth, differentiation and pathogenicity. The methyl group at the C9-position distinguishes fungal glucosylceramides from those of plants and animals, and may thus play a role in host-pathogen interactions enabling the host to recognize the fungal attack and initiate specific defense responses. This is Sphingolipid C9-methyltransferase from Komagataella phaffii (strain GS115 / ATCC 20864) (Yeast).